The sequence spans 127 residues: Aspartate 1-decarboxylase (127 aa).

The Schiff-base intermediate with substrate; via pyruvic acid role is filled by Ser25. The residue at position 25 (Ser25) is a Pyruvic acid (Ser). Thr57 is a substrate binding site. Catalysis depends on Tyr58, which acts as the Proton donor. 73 to 75 (GAA) is a substrate binding site.

It belongs to the PanD family. As to quaternary structure, heterooctamer of four alpha and four beta subunits. The cofactor is pyruvate. Is synthesized initially as an inactive proenzyme, which is activated by self-cleavage at a specific serine bond to produce a beta-subunit with a hydroxyl group at its C-terminus and an alpha-subunit with a pyruvoyl group at its N-terminus.

Its subcellular location is the cytoplasm. The catalysed reaction is L-aspartate + H(+) = beta-alanine + CO2. It functions in the pathway cofactor biosynthesis; (R)-pantothenate biosynthesis; beta-alanine from L-aspartate: step 1/1. Its function is as follows. Catalyzes the pyruvoyl-dependent decarboxylation of aspartate to produce beta-alanine. The polypeptide is Aspartate 1-decarboxylase (Carboxydothermus hydrogenoformans (strain ATCC BAA-161 / DSM 6008 / Z-2901)).